A 135-amino-acid chain; its full sequence is HTH-type transcriptional regulator CueR (135 aa).

The region spanning 1–69 (MNISDVAKIT…LEESGELVNL (69 aa)) is the HTH merR-type domain. The segment at residues 4–23 (SDVAKITGLTSKAIRFYEEK) is a DNA-binding region (H-T-H motif). 2 residues coordinate Cu(+): C112 and C120.

Homodimer.

Its subcellular location is the cytoplasm. Regulates the transcription of the copA and cueO genes. It detects cytoplasmic copper stress and activates transcription in response to increasing copper concentrations. The protein is HTH-type transcriptional regulator CueR (cueR) of Escherichia coli O6:H1 (strain CFT073 / ATCC 700928 / UPEC).